The following is a 590-amino-acid chain: AT-rich interactive domain-containing protein 5A (590 aa).

The interval 1 to 52 (MAAPPAKGNTEQSEEGDLPQLPVSPKPDDEQSRSQSPTQLQDSPEAGGEQEE) is disordered. The segment at 1–294 (MAAPPAKGNT…NKDIQDSPQN (294 aa)) is interaction with SOX9. Ser24 is subject to Phosphoserine. A compositionally biased stretch (polar residues) spans 33–42 (RSQSPTQLQD). Residues 50–142 (QEEEQAFLVS…LVLPYVRHLK (93 aa)) form the ARID domain. Glycyl lysine isopeptide (Lys-Gly) (interchain with G-Cter in ubiquitin) cross-links involve residues Lys80 and Lys89. The disordered stretch occupies residues 141–229 (LKGEDDKPLP…SGPSPPLTGA (89 aa)). The segment covering 160–186 (MAKELRGDDGTTEKLKKAKDSEERRVE) has biased composition (basic and acidic residues). Positions 187 to 210 (QTTPGKTKSDATGQTQLPCQGSSR) are enriched in polar residues. Residues Ser253 and Ser283 each carry the phosphoserine modification. Disordered regions lie at residues 275–323 (EGCR…RMEA), 367–402 (GPPG…TRKR), and 419–443 (VPTE…RGLE). Residues 367–381 (GPPGKEEGPTTKESH) are compositionally biased toward basic and acidic residues. A phosphoserine mark is found at Ser433 and Ser458.

In terms of assembly, interacts with SOX9. Interacts with ESR1. Interacts with RORC. In terms of processing, phosphorylated by MAPK14 on serine residues involving a TLR4 signaling pathway upon lipopolysaccharide (LPS) stimulation leading to its ubiquitination and proteasomal degradation. Ubiquitinated leading to proteasomal degradation; involving WWP1 linked to MAPK14-mediated phosphorylation upon LPS stimulation. In terms of tissue distribution, expressed in T cells (at protein level). Expressed at high levels in cartilage, heart, testis and bone.

Its subcellular location is the nucleus. DNA-binding protein that may regulate transcription and act as a repressor by binding to AT-rich stretches in the promoter region of target genes. May positively regulate chondrocyte-specific transcription such as of COL2A1 in collaboration with SOX9 and positively regulate histone H3 acetylation at chondrocyte-specific genes. May stimulate early-stage chondrocyte differentiation and inhibit later stage differention. Can repress ESR1-mediated transcriptional activation; proposed to act as corepressor for selective nuclear hormone receptors. As an RNA-binding protein, involved in the regulation of inflammatory response by stabilizing selective inflammation-related mRNAs, such as STAT3 and TBX21. Also stabilizes IL6 mRNA. Binds to stem loop structures located in the 3'UTRs of IL6, STAT3 and TBX21 mRNAs; at least for STAT3 prevents binding of ZC3H12A to the mRNA stem loop structure thus inhibiting its degradation activity. Contributes to elevated IL6 levels possibly implicated in autoimmunity processes. IL6-dependent stabilization of STAT3 mRNA may promote differentiation of naive CD4+ T-cells into T-helper Th17 cells. In CD4+ T-cells may also inhibit RORC-induced Th17 cell differentiation independently of IL6 signaling. Stabilization of TBX21 mRNA contributes to elevated interferon-gamma secretion in Th1 cells possibly implicated in the establishment of septic shock. Stabilizes TNFRSF4/OX40 mRNA by binding to the conserved stem loop structure in its 3'UTR; thereby competing with the mRNA-destabilizing functions of RC3H1 and endoribonuclease ZC3H12A. In Mus musculus (Mouse), this protein is AT-rich interactive domain-containing protein 5A (Arid5a).